Consider the following 228-residue polypeptide: uncharacterized protein (228 aa).

The N-terminal stretch at 1 to 16 (MILLLLALISATTAFQ) is a signal peptide. Residues 206 to 225 (LFQTLFFVTLSFLVGSAFAL) form a helical membrane-spanning segment.

The protein to A.fulgidus AF_1225.

The protein resides in the membrane. This is an uncharacterized protein from Archaeoglobus fulgidus (strain ATCC 49558 / DSM 4304 / JCM 9628 / NBRC 100126 / VC-16).